The primary structure comprises 328 residues: Interleukin-12 subunit beta (328 aa).

A signal peptide spans 1 to 22 (MCHQQLVISWFSLVFLASPLVA). In terms of domain architecture, Ig-like C2-type spans 23-106 (IWELKKDVYV…LSHSLLLLHK (84 aa)). Disulfide bonds link Cys50–Cys90, Cys131–Cys142, and Cys170–Cys193. Asn135 carries N-linked (GlcNAc...) asparagine glycosylation. The N-linked (GlcNAc...) asparagine glycan is linked to Asn222. Residues 237–328 (PPKNLQLKPL…WSEWASVPCS (92 aa)) enclose the Fibronectin type-III domain. A disulfide bridge links Cys300 with Cys327. Trp319 is a glycosylation site (C-linked (Man) tryptophan).

The protein belongs to the IL-12B family. In terms of assembly, heterodimer with IL12A; disulfide-linked. The heterodimer is known as interleukin IL-12. Heterodimer with IL23A; disulfide-linked. The heterodimer is known as interleukin IL-23. Also secreted as a monomer. Interacts with NBR1; this interaction promotes IL-12 secretion. In terms of processing, known to be C-mannosylated in the recombinant protein; it is not yet known for sure if the wild-type protein is also modified.

The protein localises to the secreted. In terms of biological role, cytokine that can act as a growth factor for activated T and NK cells, enhance the lytic activity of NK/lymphokine-activated killer cells, and stimulate the production of IFN-gamma by resting PBMC. Functionally, associates with IL23A to form the IL-23 interleukin, a heterodimeric cytokine which functions in innate and adaptive immunity. IL-23 may constitute with IL-17 an acute response to infection in peripheral tissues. IL-23 binds to a heterodimeric receptor complex composed of IL12RB1 and IL23R, activates the Jak-Stat signaling cascade, stimulates memory rather than naive T-cells and promotes production of pro-inflammatory cytokines. IL-23 induces autoimmune inflammation and thus may be responsible for autoimmune inflammatory diseases and may be important for tumorigenesis. This Homo sapiens (Human) protein is Interleukin-12 subunit beta (IL12B).